A 191-amino-acid polypeptide reads, in one-letter code: Holliday junction branch migration complex subunit RuvA (191 aa).

The tract at residues 1 to 64 (MIGRITGTLA…EDAHLLYGFG (64 aa)) is domain I. The tract at residues 65–138 (SEVERAAFRE…KGKPVFAGAL (74 aa)) is domain II. Residues 138-141 (LASV) are flexible linker. The interval 142 to 191 (PSAGASDDVRQALLALGYNERETAATVRELPAGLAVGEAIRQALRALSRA) is domain III.

Belongs to the RuvA family. In terms of assembly, homotetramer. Forms an RuvA(8)-RuvB(12)-Holliday junction (HJ) complex. HJ DNA is sandwiched between 2 RuvA tetramers; dsDNA enters through RuvA and exits via RuvB. An RuvB hexamer assembles on each DNA strand where it exits the tetramer. Each RuvB hexamer is contacted by two RuvA subunits (via domain III) on 2 adjacent RuvB subunits; this complex drives branch migration. In the full resolvosome a probable DNA-RuvA(4)-RuvB(12)-RuvC(2) complex forms which resolves the HJ.

It is found in the cytoplasm. In terms of biological role, the RuvA-RuvB-RuvC complex processes Holliday junction (HJ) DNA during genetic recombination and DNA repair, while the RuvA-RuvB complex plays an important role in the rescue of blocked DNA replication forks via replication fork reversal (RFR). RuvA specifically binds to HJ cruciform DNA, conferring on it an open structure. The RuvB hexamer acts as an ATP-dependent pump, pulling dsDNA into and through the RuvAB complex. HJ branch migration allows RuvC to scan DNA until it finds its consensus sequence, where it cleaves and resolves the cruciform DNA. This is Holliday junction branch migration complex subunit RuvA from Thiobacillus denitrificans (strain ATCC 25259 / T1).